Reading from the N-terminus, the 314-residue chain is Malate dehydrogenase (314 aa).

NAD(+) contacts are provided by residues 12–17 (GAGNIG) and Asp-36. 2 residues coordinate substrate: Arg-85 and Arg-91. NAD(+)-binding positions include Asn-98 and 121-123 (VTN). Residues Asn-123 and Arg-154 each coordinate substrate. His-178 acts as the Proton acceptor in catalysis.

The protein belongs to the LDH/MDH superfamily. MDH type 3 family.

The catalysed reaction is (S)-malate + NAD(+) = oxaloacetate + NADH + H(+). Catalyzes the reversible oxidation of malate to oxaloacetate. The protein is Malate dehydrogenase of Wolbachia pipientis subsp. Culex pipiens (strain wPip).